Consider the following 266-residue polypeptide: Undecaprenyl-diphosphatase (266 aa).

Helical transmembrane passes span 1-21 (MNIFQTIVLALVQGLSEFLPI), 43-63 (FDVVVHMGTLSAVIFYYQAMI), 83-103 (SKLAWGVLLGTIPVGLVGMIF), 114-134 (VEIIAYATLVFGVLLGFASWF), 144-164 (TISWVDIGFIGMAQTLALIPG), 186-206 (IQFAFLLSIPVISLSLILILI), 219-239 (LLAMGFVVAAISAYVTIVFFI), and 245-265 (VGMMPFVIYRLTLGIFLFFFI).

The protein belongs to the UppP family.

The protein resides in the cell inner membrane. The catalysed reaction is di-trans,octa-cis-undecaprenyl diphosphate + H2O = di-trans,octa-cis-undecaprenyl phosphate + phosphate + H(+). Its function is as follows. Catalyzes the dephosphorylation of undecaprenyl diphosphate (UPP). Confers resistance to bacitracin. This chain is Undecaprenyl-diphosphatase, found in Ruthia magnifica subsp. Calyptogena magnifica.